The following is a 225-amino-acid chain: NAD(P)H-quinone oxidoreductase subunit K, chloroplastic (225 aa).

Positions 43, 44, 108, and 139 each coordinate [4Fe-4S] cluster.

This sequence belongs to the complex I 20 kDa subunit family. In terms of assembly, NDH is composed of at least 16 different subunits, 5 of which are encoded in the nucleus. Requires [4Fe-4S] cluster as cofactor.

It is found in the plastid. The protein localises to the chloroplast thylakoid membrane. It carries out the reaction a plastoquinone + NADH + (n+1) H(+)(in) = a plastoquinol + NAD(+) + n H(+)(out). The catalysed reaction is a plastoquinone + NADPH + (n+1) H(+)(in) = a plastoquinol + NADP(+) + n H(+)(out). Its function is as follows. NDH shuttles electrons from NAD(P)H:plastoquinone, via FMN and iron-sulfur (Fe-S) centers, to quinones in the photosynthetic chain and possibly in a chloroplast respiratory chain. The immediate electron acceptor for the enzyme in this species is believed to be plastoquinone. Couples the redox reaction to proton translocation, and thus conserves the redox energy in a proton gradient. This chain is NAD(P)H-quinone oxidoreductase subunit K, chloroplastic, found in Atropa belladonna (Belladonna).